The chain runs to 339 residues: tRNA N6-adenosine threonylcarbamoyltransferase (339 aa).

Residues histidine 111 and histidine 115 each coordinate Fe cation. Residues 134 to 138 (LVSGG), aspartate 167, glycine 180, and asparagine 272 each bind substrate. Fe cation is bound at residue aspartate 300.

It belongs to the KAE1 / TsaD family. Requires Fe(2+) as cofactor.

The protein localises to the cytoplasm. It catalyses the reaction L-threonylcarbamoyladenylate + adenosine(37) in tRNA = N(6)-L-threonylcarbamoyladenosine(37) in tRNA + AMP + H(+). In terms of biological role, required for the formation of a threonylcarbamoyl group on adenosine at position 37 (t(6)A37) in tRNAs that read codons beginning with adenine. Is involved in the transfer of the threonylcarbamoyl moiety of threonylcarbamoyl-AMP (TC-AMP) to the N6 group of A37, together with TsaE and TsaB. TsaD likely plays a direct catalytic role in this reaction. In Vibrio cholerae serotype O1 (strain ATCC 39541 / Classical Ogawa 395 / O395), this protein is tRNA N6-adenosine threonylcarbamoyltransferase.